The primary structure comprises 72 residues: Translation initiation factor IF-1 (72 aa).

An S1-like domain is found at 1-72; the sequence is MAKDDVIEIE…TKGRITYRFK (72 aa).

This sequence belongs to the IF-1 family. As to quaternary structure, component of the 30S ribosomal translation pre-initiation complex which assembles on the 30S ribosome in the order IF-2 and IF-3, IF-1 and N-formylmethionyl-tRNA(fMet); mRNA recruitment can occur at any time during PIC assembly.

It localises to the cytoplasm. One of the essential components for the initiation of protein synthesis. Stabilizes the binding of IF-2 and IF-3 on the 30S subunit to which N-formylmethionyl-tRNA(fMet) subsequently binds. Helps modulate mRNA selection, yielding the 30S pre-initiation complex (PIC). Upon addition of the 50S ribosomal subunit IF-1, IF-2 and IF-3 are released leaving the mature 70S translation initiation complex. The polypeptide is Translation initiation factor IF-1 (Latilactobacillus sakei subsp. sakei (strain 23K) (Lactobacillus sakei subsp. sakei)).